A 36-amino-acid polypeptide reads, in one-letter code: Pancreatic polypeptide (36 aa).

Tyr36 is subject to Tyrosine amide.

The protein belongs to the NPY family.

Its subcellular location is the secreted. Its function is as follows. Hormone secreted by pancreatic cells that acts as a regulator of pancreatic and gastrointestinal functions probably by signaling through the G protein-coupled receptor NPY4R2. This chain is Pancreatic polypeptide (PPY), found in Equus przewalskii (Przewalski's horse).